We begin with the raw amino-acid sequence, 203 residues long: Peroxiredoxin (203 aa).

In terms of domain architecture, Thioredoxin spans 3 to 156 (VVLGQKAPDF…IIRVIKALQF (154 aa)). C44 (cysteine sulfenic acid (-SOH) intermediate) is an active-site residue. R119 contributes to the substrate binding site.

This sequence belongs to the peroxiredoxin family. Prx6 subfamily. Homodecamer. Pentamer of dimers that assemble into a ring structure.

The protein localises to the cytoplasm. The catalysed reaction is a hydroperoxide + [thioredoxin]-dithiol = an alcohol + [thioredoxin]-disulfide + H2O. Thiol-specific peroxidase that catalyzes the reduction of hydrogen peroxide and organic hydroperoxides to water and alcohols, respectively. Plays a role in cell protection against oxidative stress by detoxifying peroxides. This is Peroxiredoxin from Thermoplasma volcanium (strain ATCC 51530 / DSM 4299 / JCM 9571 / NBRC 15438 / GSS1).